We begin with the raw amino-acid sequence, 617 residues long: Glutamyl-tRNA(Gln) amidotransferase subunit E (617 aa).

It belongs to the GatB/GatE family. GatE subfamily. Heterodimer of GatD and GatE.

The enzyme catalyses L-glutamyl-tRNA(Gln) + L-glutamine + ATP + H2O = L-glutaminyl-tRNA(Gln) + L-glutamate + ADP + phosphate + H(+). Its function is as follows. Allows the formation of correctly charged Gln-tRNA(Gln) through the transamidation of misacylated Glu-tRNA(Gln) in organisms which lack glutaminyl-tRNA synthetase. The reaction takes place in the presence of glutamine and ATP through an activated gamma-phospho-Glu-tRNA(Gln). The GatDE system is specific for glutamate and does not act on aspartate. The protein is Glutamyl-tRNA(Gln) amidotransferase subunit E of Natronomonas pharaonis (strain ATCC 35678 / DSM 2160 / CIP 103997 / JCM 8858 / NBRC 14720 / NCIMB 2260 / Gabara) (Halobacterium pharaonis).